Consider the following 106-residue polypeptide: Iron-sulfur cluster assembly protein CyaY (106 aa).

The protein belongs to the frataxin family. As to quaternary structure, interacts with IscS. Certain pairs of proteins can bind simultaneously to IscS; IscS-IscU-CyaY complexes can be isolated in vitro, but (IscS-TusA-CyaY) complexes cannot.

Functionally, involved in iron-sulfur (Fe-S) cluster assembly. May act as a regulator of Fe-S biogenesis. The sequence is that of Iron-sulfur cluster assembly protein CyaY from Escherichia coli O157:H7.